The sequence spans 716 residues: 1,4-alpha-glucan branching enzyme GlgB (716 aa).

Aspartate 399 (nucleophile) is an active-site residue. The Proton donor role is filled by glutamate 452.

This sequence belongs to the glycosyl hydrolase 13 family. GlgB subfamily. As to quaternary structure, monomer.

It carries out the reaction Transfers a segment of a (1-&gt;4)-alpha-D-glucan chain to a primary hydroxy group in a similar glucan chain.. Its pathway is glycan biosynthesis; glycogen biosynthesis. In terms of biological role, catalyzes the formation of the alpha-1,6-glucosidic linkages in glycogen by scission of a 1,4-alpha-linked oligosaccharide from growing alpha-1,4-glucan chains and the subsequent attachment of the oligosaccharide to the alpha-1,6 position. This is 1,4-alpha-glucan branching enzyme GlgB from Rhodopseudomonas palustris (strain ATCC BAA-98 / CGA009).